Consider the following 67-residue polypeptide: DNA-directed RNA polymerases I, II, and III subunit RPABC5 (67 aa).

Zn(2+) contacts are provided by cysteine 7, cysteine 10, cysteine 44, and cysteine 45.

It belongs to the archaeal Rpo10/eukaryotic RPB10 RNA polymerase subunit family. Component of the RNA polymerase I (Pol I), RNA polymerase II (Pol II) and RNA polymerase III (Pol III) complexes consisting of at least 13, 12 and 17 subunits, respectively.

The protein resides in the nucleus. DNA-dependent RNA polymerase catalyzes the transcription of DNA into RNA using the four ribonucleoside triphosphates as substrates. Common component of RNA polymerases I, II and III which synthesize ribosomal RNA precursors, mRNA precursors and many functional non-coding RNAs, and a small RNAs, such as 5S rRNA and tRNAs, respectively. Pol II is the central component of the basal RNA polymerase II transcription machinery. Pols are composed of mobile elements that move relative to each other. In Pol II, Polr2L is part of the core element with the central large cleft. In Drosophila melanogaster (Fruit fly), this protein is DNA-directed RNA polymerases I, II, and III subunit RPABC5.